The sequence spans 837 residues: Tuftelin-interacting protein 11 (837 aa).

Basic and acidic residues-rich tracts occupy residues 1 to 13 (MSLSHLYRDGEGR) and 53 to 64 (VWAERDSDDERP). 3 disordered regions span residues 1-21 (MSLSHLYRDGEGRIDDDDDER), 53-72 (VWAERDSDDERPSFGGKRAR), and 85-133 (LKKG…KGFA). The segment at 1–50 (MSLSHLYRDGEGRIDDDDDERENFEITDWDLQNEFNPNRQRHWQTKEEAT) is required for interaction with DHX15. A phosphoserine mark is found at S2, S59, and S98. Over residues 91–102 (EEAELEDSDDEE) the composition is skewed to acidic residues. The segment covering 103 to 116 (KPVKQDDFPKDFGP) has biased composition (basic and acidic residues). S144 carries the phosphoserine modification. One can recognise a G-patch domain in the interval 149-195 (TKGIGQKLLQKMGYVPGRGLGKNAQGIINPIEAKQRKGKGAVGAYGS). A disordered region spans residues 179–236 (IEAKQRKGKGAVGAYGSERTTQSMQDFPVVDSEEEAEEEFQKELSQWRKDPSGSKKKP). S210 bears the Phosphoserine mark. The span at 217 to 231 (EFQKELSQWRKDPSG) shows a compositional bias: basic and acidic residues. Residues 700–705 (VKDKFN) carry the Nuclear localization signal motif. Residues 710–734 (IMNRAVSSNVGAYMQPGARENIAYL) are required for nuclear speckle localization.

It belongs to the TFP11/STIP family. In terms of assembly, identified in the spliceosome C complex. Found in the Intron Large (IL) complex, a post-mRNA release spliceosomal complex containing the excised intron, U2, U5 and U6 snRNPs, and splicing factors. Interacts with TUFT1. Interacts with DHX15; indicative for a recruitment of DHX15 to the IL complex. Interacts with GCFC2.

The protein localises to the cytoplasm. It localises to the nucleus. Its function is as follows. Involved in pre-mRNA splicing, specifically in spliceosome disassembly during late-stage splicing events. Intron turnover seems to proceed through reactions in two lariat-intron associated complexes termed Intron Large (IL) and Intron Small (IS). In cooperation with DHX15 seems to mediate the transition of the U2, U5 and U6 snRNP-containing IL complex to the snRNP-free IS complex leading to efficient debranching and turnover of excised introns. May play a role in the differentiation of ameloblasts and odontoblasts or in the forming of the enamel extracellular matrix. This chain is Tuftelin-interacting protein 11 (TFIP11), found in Pongo abelii (Sumatran orangutan).